A 612-amino-acid polypeptide reads, in one-letter code: Bifunctional lycopene cyclase/phytoene synthase (612 aa).

A lycopene beta-cyclase region spans residues methionine 1–asparagine 268. Transmembrane regions (helical) follow at residues tryptophan 3–valine 23, leucine 31–leucine 51, leucine 112–serine 130, isoleucine 148–glycine 168, glycine 171–isoleucine 191, asparagine 203–leucine 223, and isoleucine 246–cysteine 266. The phytoene synthase stretch occupies residues threonine 275 to lysine 612.

The protein in the N-terminal section; belongs to the lycopene beta-cyclase family. In the C-terminal section; belongs to the phytoene/squalene synthase family.

The protein resides in the membrane. It catalyses the reaction all-trans-lycopene = gamma-carotene. It carries out the reaction gamma-carotene = all-trans-beta-carotene. The catalysed reaction is 2 (2E,6E,10E)-geranylgeranyl diphosphate = 15-cis-phytoene + 2 diphosphate. Its pathway is carotenoid biosynthesis; beta-carotene biosynthesis. The protein operates within carotenoid biosynthesis; phytoene biosynthesis; all-trans-phytoene from geranylgeranyl diphosphate: step 1/1. Its function is as follows. Bifunctional enzyme; part of the car gene cluster that mediates the biosynthesis of neurosporaxanthin, a carboxylic apocarotenoid acting as an essential protective pigments and leading to orange pigmentation. CarAR catalyzes the first step of the pathway by converting geranylgeranyl diphosphate to phytoene, as well as the later cyclization step that transforms the carB product lycopene into gamma-carotene. CarAR also converts part of gamma-carotene into beta-carotene. Neurosporaxanthin is synthesized from geranyl-geranyl pyrophosphate (GGPP) through several enzymatic activities. Phytoene synthase activity performed by the bifunctional enzyme carAR first produces phytoene from geranyl-geranyl pyrophosphate (GGPP). The phytoene dehydrogenase carB then introduces 4 desaturations to lead to lycopene which is substrate of the carotene cyclase activity of carAR that leads to the production of gamma-carotene. CarB then performs a 5th desaturation reaction to yield torulene. Torulene is the substrate of the dioxidase carT that breaks the molecule, removing five carbon atoms to yield beta-apo-4'-carotenal, whereas the aldehyde dehydrogenase carD mediates the last step by converting beta-apo-4'-carotenal into neurosporaxanthin. The sequence is that of Bifunctional lycopene cyclase/phytoene synthase from Fusarium fujikuroi (Bakanae and foot rot disease fungus).